The sequence spans 418 residues: Protein FAM53A (418 aa).

2 disordered regions span residues threonine 198–arginine 236 and glutamate 248–arginine 269. Over residues serine 205–glycine 229 the composition is skewed to low complexity. Polar residues predominate over residues glutamate 248 to glutamate 265. Residues lysine 285–arginine 293 carry the Nuclear localization signal motif.

The protein belongs to the FAM53 family.

Its subcellular location is the nucleus. Its function is as follows. May play an important role in neural development; the dorsomedial roof of the third ventricle. The sequence is that of Protein FAM53A from Gallus gallus (Chicken).